The following is a 196-amino-acid chain: Ribonuclease S-F11 (196 aa).

An intrachain disulfide couples C16 to C21. An N-linked (GlcNAc...) asparagine glycan is attached at N28. H32 (proton donor) is an active-site residue. RNA-binding positions include H32 and Q69–L70. 3 cysteine pairs are disulfide-bonded: C46–C94, C153–C186, and C169–C180. Residue Q87 is part of the active site. K90 to H91 serves as a coordination point for RNA. The active-site Proton acceptor is the H91.

It belongs to the RNase T2 family. As to quaternary structure, monomer.

The protein resides in the secreted. Its subcellular location is the extracellular space. It carries out the reaction a ribonucleotidyl-ribonucleotide-RNA + H2O = a 3'-end 3'-phospho-ribonucleotide-RNA + a 5'-end dephospho-ribonucleoside-RNA + H(+). In terms of biological role, self-incompatibility (SI) is the inherited ability of a flowering plant to prevent self-fertilization by discriminating between self and non-self pollen during pollination. In many species of the Solanaceae, self-incompatibility is controlled by the single, multiallelic locus S. This is Ribonuclease S-F11 from Nicotiana alata (Winged tobacco).